A 545-amino-acid chain; its full sequence is MGTSSPEMAAALLLVMAALAGVAAGGDIVHQDDEAPKIPGCSNDFVLVKVQTWVNNREDGEFVGVGARFGPTIESKEKHANRTGLLLADPIDCCDPPTQKVAGDVLLVQRGNCKFTKKAKNAEAAGASAIIIINHVHELYKMVCDRNETDLDINIPAVLLPKDAGNDLQKLLTRGKVSVQLYSPDRPLVDTAEVFLWLMAVGTILCASYWSAWSAREAVIEQEKLLKDGHESSLNLEAGGSSGMVDINMTSAILFVVIASCFLIMLYKLMSHWFVELLVVIFCIGGVEGLQTCLVALLSRWFKPAAESFVKVPFFGAVSYLTIAVCPFCIVFAVIWAVYRRMTYAWIGQDILGIALIVTVIQIVRIPNLKVGSVLLSCSFLYDIFWVFISKMWFHESVMIVVARGDKTDEDGVPMLLKIPRMFDPWGGFSIIGFGDILLPGLLIAFALRYDWAAKKTLQSGYFLWSMVAYGSGLMITYVALNLMDGHGQPALLYIVPFTLGTFIALGRKRGELRNLWTRGQPERVCTHMHMQPSPKDTNCDAVSS.

Positions 1-25 (MGTSSPEMAAALLLVMAALAGVAAG) are cleaved as a signal peptide. The Lumenal portion of the chain corresponds to 26–193 (GDIVHQDDEA…PDRPLVDTAE (168 aa)). N-linked (GlcNAc...) asparagine glycosylation is found at Asn-81 and Asn-147. Residues 90-170 (PIDCCDPPTQ…PKDAGNDLQK (81 aa)) enclose the PA domain. A helical transmembrane segment spans residues 194–214 (VFLWLMAVGTILCASYWSAWS). At 215–246 (AREAVIEQEKLLKDGHESSLNLEAGGSSGMVD) the chain is on the cytoplasmic side. The chain crosses the membrane as a helical span at residues 247-267 (INMTSAILFVVIASCFLIMLY). The Lumenal portion of the chain corresponds to 268 to 276 (KLMSHWFVE). The chain crosses the membrane as a helical span at residues 277-297 (LLVVIFCIGGVEGLQTCLVAL). Topologically, residues 298 to 317 (LSRWFKPAAESFVKVPFFGA) are cytoplasmic. Residues 318 to 338 (VSYLTIAVCPFCIVFAVIWAV) traverse the membrane as a helical segment. The Lumenal portion of the chain corresponds to 339-343 (YRRMT). Residues 344-364 (YAWIGQDILGIALIVTVIQIV) traverse the membrane as a helical segment. Residues 365–373 (RIPNLKVGS) lie on the Cytoplasmic side of the membrane. Residues 374–394 (VLLSCSFLYDIFWVFISKMWF) traverse the membrane as a helical segment. Residue Asp-383 is part of the active site. Over 395 to 427 (HESVMIVVARGDKTDEDGVPMLLKIPRMFDPWG) the chain is Lumenal. A helical transmembrane segment spans residues 428–448 (GFSIIGFGDILLPGLLIAFAL). Residue Asp-436 is part of the active site. At 449–460 (RYDWAAKKTLQS) the chain is on the cytoplasmic side. A helical transmembrane segment spans residues 461–481 (GYFLWSMVAYGSGLMITYVAL). Over 482–485 (NLMD) the chain is Lumenal. The chain crosses the membrane as a helical span at residues 486–506 (GHGQPALLYIVPFTLGTFIAL). Residues 490–492 (PAL) carry the PAL motif. The Cytoplasmic segment spans residues 507–545 (GRKRGELRNLWTRGQPERVCTHMHMQPSPKDTNCDAVSS).

The protein belongs to the peptidase A22B family. In terms of processing, glycosylated.

It is found in the endosome membrane. Intramembrane-cleaving aspartic protease (I-CLiP) that cleaves type II membrane signal peptides in the hydrophobic plane of the membrane. This is Signal peptide peptidase-like 4 (SPPL4) from Oryza sativa subsp. japonica (Rice).